The following is a 305-amino-acid chain: T-cell immunoglobulin and mucin domain-containing protein 2 (305 aa).

The signal sequence occupies residues M1–S21. The Ig-like V-type domain maps to H22–E125. The Extracellular segment spans residues H22–G231. 3 disulfide bridges follow: C37-C109, C50-C61, and C56-C108. N-linked (GlcNAc...) asparagine glycans are attached at residues N86 and N91. Positions I130–Y174 are disordered. Residues S131 to T167 show a composition bias toward low complexity. Residues F232 to I252 form a helical membrane-spanning segment. Residues T253 to S305 are Cytoplasmic-facing.

Belongs to the immunoglobulin superfamily. TIM family. As to quaternary structure, homodimer. Expressed on late differentiated Th2 cells. Expressed also on all splenic B-cells, with increased levels on germinal center B-cells, in the liver, especially in bile duct epithelial cells, and in renal tubule cells. Within retina, mainly expressed in Mueller cells.

The protein localises to the cell membrane. In terms of biological role, cell surface glycoprotein that participates in iron homeostasis in the liver, the kidney, the retina and oligodendrocytes by acting as a receptor of H-ferritin. Mechanistically, mediates iron-containing ferritin uptake via an endocytic pathway, trafficking to endosomes and subsequently to lysosomes. Plays also an important role in the regulation of Th2 immunity. Receptor for SEMA4A involved in the regulation of T-cell function, enhancing T-cell activation. This Mus musculus (Mouse) protein is T-cell immunoglobulin and mucin domain-containing protein 2 (Timd2).